The primary structure comprises 511 residues: Tyrosine--tRNA ligase, chloroplastic/mitochondrial (511 aa).

Tyrosine 118 is a binding site for L-tyrosine. Aspartate 122 is an ATP binding site. The 'HIGH' region motif lies at 123-132 (PTAESLHLGN). Aspartate 162, tyrosine 256, glutamine 260, aspartate 263, and glutamine 282 together coordinate L-tyrosine. The short motif at 318-322 (KFGKS) is the 'KMSKS' region element. Residue lysine 321 coordinates ATP. The region spanning 444–510 (LSIVDLSVSA…GKKNKVVVRI (67 aa)) is the S4 RNA-binding domain.

It belongs to the class-I aminoacyl-tRNA synthetase family.

It is found in the plastid. It localises to the chloroplast. Its subcellular location is the mitochondrion. It carries out the reaction tRNA(Tyr) + L-tyrosine + ATP = L-tyrosyl-tRNA(Tyr) + AMP + diphosphate + H(+). Catalyzes the attachment of tyrosine to tRNA(Tyr) in a two-step reaction: tyrosine is first activated by ATP to form Tyr-AMP and then transferred to the acceptor end of tRNA(Tyr). The chain is Tyrosine--tRNA ligase, chloroplastic/mitochondrial from Arabidopsis thaliana (Mouse-ear cress).